Consider the following 255-residue polypeptide: tRNA pseudouridine synthase A (255 aa).

The active-site Nucleophile is aspartate 52. Residue tyrosine 111 participates in substrate binding.

Belongs to the tRNA pseudouridine synthase TruA family. In terms of assembly, homodimer.

The enzyme catalyses uridine(38/39/40) in tRNA = pseudouridine(38/39/40) in tRNA. Formation of pseudouridine at positions 38, 39 and 40 in the anticodon stem and loop of transfer RNAs. This Cereibacter sphaeroides (strain ATCC 17029 / ATH 2.4.9) (Rhodobacter sphaeroides) protein is tRNA pseudouridine synthase A.